We begin with the raw amino-acid sequence, 242 residues long: Triosephosphate isomerase (242 aa).

8 to 10 serves as a coordination point for substrate; the sequence is NWK. The Electrophile role is filled by His-98. The active-site Proton acceptor is Glu-167. Substrate contacts are provided by residues Gly-173, Ser-205, and 226-227; that span reads GG.

This sequence belongs to the triosephosphate isomerase family. As to quaternary structure, homodimer.

The protein localises to the cytoplasm. It carries out the reaction D-glyceraldehyde 3-phosphate = dihydroxyacetone phosphate. Its pathway is carbohydrate biosynthesis; gluconeogenesis. It functions in the pathway carbohydrate degradation; glycolysis; D-glyceraldehyde 3-phosphate from glycerone phosphate: step 1/1. Functionally, involved in the gluconeogenesis. Catalyzes stereospecifically the conversion of dihydroxyacetone phosphate (DHAP) to D-glyceraldehyde-3-phosphate (G3P). In Mesomycoplasma hyopneumoniae (strain 7448) (Mycoplasma hyopneumoniae), this protein is Triosephosphate isomerase.